Reading from the N-terminus, the 197-residue chain is Holliday junction branch migration complex subunit RuvA (197 aa).

The interval 1 to 63 (MYDYIKGNLT…EDAHLLYGFH (63 aa)) is domain I. Residues 64-142 (TEDEKAVFLN…DINEVSTDKS (79 aa)) form a domain II region. The interval 143 to 147 (KVSTI) is flexible linker. Positions 148-197 (NNNQELEEAVEALLALGYKTNELKKIEKFFEGTTDTAENYIKSALKMLMK) are domain III.

It belongs to the RuvA family. Homotetramer. Forms an RuvA(8)-RuvB(12)-Holliday junction (HJ) complex. HJ DNA is sandwiched between 2 RuvA tetramers; dsDNA enters through RuvA and exits via RuvB. An RuvB hexamer assembles on each DNA strand where it exits the tetramer. Each RuvB hexamer is contacted by two RuvA subunits (via domain III) on 2 adjacent RuvB subunits; this complex drives branch migration. In the full resolvosome a probable DNA-RuvA(4)-RuvB(12)-RuvC(2) complex forms which resolves the HJ.

The protein resides in the cytoplasm. Its function is as follows. The RuvA-RuvB-RuvC complex processes Holliday junction (HJ) DNA during genetic recombination and DNA repair, while the RuvA-RuvB complex plays an important role in the rescue of blocked DNA replication forks via replication fork reversal (RFR). RuvA specifically binds to HJ cruciform DNA, conferring on it an open structure. The RuvB hexamer acts as an ATP-dependent pump, pulling dsDNA into and through the RuvAB complex. HJ branch migration allows RuvC to scan DNA until it finds its consensus sequence, where it cleaves and resolves the cruciform DNA. The polypeptide is Holliday junction branch migration complex subunit RuvA (Streptococcus mutans serotype c (strain ATCC 700610 / UA159)).